A 243-amino-acid polypeptide reads, in one-letter code: MRKIVIAGNWKMFKTQAETQEFLQGFLPHLEETPQGREVILCPPFTDLSVLSKTLHGSLIQLGAQNIHWEEFGAYTGEISGPMLTESGVRFVIVGHSERRQYFGETDATVNLRLRTAQRFGLTPILCVGETKQQRDAGETESLIALQLDKGLVDIDQNNLVIAYEPIWAIGTGETCEAVEANRIIGLIRSQLSNPNVSIQYGGSVKPNNIDEIMAQPEIDGVLVGGASLEPESFARIVNFHLV.

9–11 is a binding site for substrate; that stretch reads NWK. Catalysis depends on H96, which acts as the Electrophile. The Proton acceptor role is filled by E165. Substrate-binding positions include G171, S204, and 225–226; that span reads GG.

It belongs to the triosephosphate isomerase family. In terms of assembly, homodimer.

The protein localises to the cytoplasm. It catalyses the reaction D-glyceraldehyde 3-phosphate = dihydroxyacetone phosphate. Its pathway is carbohydrate biosynthesis; gluconeogenesis. The protein operates within carbohydrate degradation; glycolysis; D-glyceraldehyde 3-phosphate from glycerone phosphate: step 1/1. Functionally, involved in the gluconeogenesis. Catalyzes stereospecifically the conversion of dihydroxyacetone phosphate (DHAP) to D-glyceraldehyde-3-phosphate (G3P). In Nostoc punctiforme (strain ATCC 29133 / PCC 73102), this protein is Triosephosphate isomerase.